The chain runs to 428 residues: C4-dicarboxylate transport protein (428 aa).

8 consecutive transmembrane segments (helical) span residues 8–28 (VLYV…HLYP), 44–64 (LIKM…IAGM), 78–98 (LLYF…ATHI), 148–168 (GEIL…AHLG), 184–204 (VLFG…FGAM), 222–242 (LIGT…GAIA), 307–327 (IYMT…LTWM), and 355–375 (AATL…ILGI).

It belongs to the dicarboxylate/amino acid:cation symporter (DAACS) (TC 2.A.23) family.

It is found in the cell inner membrane. Functionally, responsible for the transport of dicarboxylates such as succinate, fumarate, and malate from the periplasm across the membrane. The polypeptide is C4-dicarboxylate transport protein (Burkholderia thailandensis (strain ATCC 700388 / DSM 13276 / CCUG 48851 / CIP 106301 / E264)).